The sequence spans 561 residues: Septation ring formation regulator EzrA (561 aa).

At 1–3 the chain is on the extracellular side; that stretch reads MWI. Residues 4-22 form a helical membrane-spanning segment; sequence VVFSLLVLTVTFFVYGALR. Topologically, residues 23 to 561 are cytoplasmic; the sequence is RKAFYKRVDK…VLEKVQHLAG (539 aa). 3 coiled-coil regions span residues 98-130, 166-214, and 251-465; these read RFQKAKALLDTIEQRLHSIEEQLKIMVDDIQVL, AKVF…HLLK, and FAID…KLSD.

The protein belongs to the EzrA family.

The protein localises to the cell membrane. Its function is as follows. Negative regulator of FtsZ ring formation; modulates the frequency and position of FtsZ ring formation. Inhibits FtsZ ring formation at polar sites. Interacts either with FtsZ or with one of its binding partners to promote depolymerization. The protein is Septation ring formation regulator EzrA of Halalkalibacterium halodurans (strain ATCC BAA-125 / DSM 18197 / FERM 7344 / JCM 9153 / C-125) (Bacillus halodurans).